The chain runs to 128 residues: Cionin (128 aa).

An N-terminal signal peptide occupies residues 1–22 (MGSNIVIYFSIIVIVTLNVNGV). Residues 23–108 (PASDLFKSVS…NQGHMQRMDR (86 aa)) constitute a propeptide that is removed on maturation. 2 positions are modified to sulfotyrosine: Y110 and Y111. F116 carries the post-translational modification Phenylalanine amide. The propeptide occupies 120-128 (AIEDVDYEY).

This sequence belongs to the gastrin/cholecystokinin family. As to expression, expressed in both the gut and the neural ganglion.

The protein resides in the secreted. The sequence is that of Cionin from Ciona intestinalis (Transparent sea squirt).